The sequence spans 556 residues: Cytochrome P450 monooxygenase polC (556 aa).

Residues 17–37 (LCFAISLLCAVAIATFLHKLY) traverse the membrane as a helical segment. C479 lines the heme pocket.

The protein belongs to the cytochrome P450 family. It depends on heme as a cofactor.

It is found in the membrane. It catalyses the reaction motiol + 3 reduced [NADPH--hemoprotein reductase] + 3 O2 = 4beta-carboxyl motiol + 3 oxidized [NADPH--hemoprotein reductase] + 4 H2O + 4 H(+). Its pathway is secondary metabolite biosynthesis; terpenoid biosynthesis. Cytochrome P450 monooxygenase; part of the gene cluster that mediates the biosynthesis of antifungal fernane-type triterpenoid polytolypin. PolC uses motiol as a substrate and converts the methyl group at position C-4 to a carboxyl group. Within the pathway, the triterpene cyclase polA first catalyzes the cyclization of 2,3-oxidosqualene to motiol, polC converts the 4-alpha-methyl group of motiol to a carboxyl group, polB is responsible for appending a hydroxyl group at the 2-alpha position and polE is a dual functional P450, which can catalyze the formation of both the 1-beta-hydroxyl group and 10-beta-carboxyl group. This is Cytochrome P450 monooxygenase polC from Polytolypa hystricis (strain UAMH7299).